The following is a 1201-amino-acid chain: Kinesin-like protein costa (1201 aa).

The 388-residue stretch at 4–391 (PIQVAVRIFP…LQFAFKVQCV (388 aa)) folds into the Kinesin motor domain. The disordered stretch occupies residues 23–92 (SFGPTEPKKD…NGNDSGQKDY (70 aa)). Basic and acidic residues predominate over residues 28-56 (EPKKDAQAVDEGADSKDSEAQVPAAEKDN). Residues 57-75 (PSISETDPNGNAEQDSAAD) show a composition bias toward polar residues. Position 175 to 182 (175 to 182 (GQRGQGKS)) interacts with ATP. Disordered stretches follow at residues 502 to 536 (AEEP…PDLD), 565 to 606 (HPKA…GASL), and 618 to 639 (ASQQ…ESSS). Residues 510 to 521 (SEAANSESPNSD) are compositionally biased toward low complexity. A phosphoserine mark is found at Ser-599 and Ser-605. 2 coiled-coil regions span residues 652 to 821 (AATA…ELVK) and 968 to 1001 (TKVI…ERVL).

The protein belongs to the TRAFAC class myosin-kinesin ATPase superfamily. Kinesin family. KIF27 subfamily. As to quaternary structure, homodimer (Potential). Binds microtubules. Interacts with ci, smo, sgg, CkIalpha and protein kinase A catalytic subunit. Interacts (via kinesin motor domain) with Ubr3. In terms of processing, polyubiquitinated by Ubr3, which leads to proteasomal degradation.

Its subcellular location is the cytoplasm. It is found in the cytoskeleton. Functionally, regulates cubitus interruptus (ci) processing by recruiting multiple kinases to promote its efficient phosphorylation. Scaffolds multiple kinases and ci into proximity to promote its hyperphosphorylation, which then targets it for SCFSlimb/proteasome-mediated processing to generate its repressor form. Hh signaling inhibits ci phosphorylation by interfering with the cos-ci-kinases complex formation. Negatively regulates hh-signaling pathways during various processes, including photoreceptor differentiation. May negatively regulate a hh-signaling pathway which functions in the intestinal immune response to bacterial uracil by activating the Duox-dependent production of reactive oxygen species (ROS). The chain is Kinesin-like protein costa (cos) from Drosophila melanogaster (Fruit fly).